The following is a 205-amino-acid chain: MASASPVATMSGRGARNLLQFLRLVGQLKRVPRTGWVYRNVQKPESVSDHMYRMAVMALVTKDEHLNKDRCVRLALVHDMAECIVGDIAPADNVPREEKHRREEEAMKQLTQLLPEDLQKELYELWEEYETQSSAEAKFVKQLDQCEMILQASEYEDLENKPGRLQDFYDSTAGKFSHPEIVQLVSELEAERNANIAGAASEPCS.

Ala2 is subject to N-acetylalanine. Phosphoserine occurs at positions 3 and 5. Residues 47–149 (VSDHMYRMAV…VKQLDQCEMI (103 aa)) form the HD domain. Positions 50, 78, 79, 82, 87, 88, and 144 each coordinate a divalent metal cation. Phosphoserine is present on Ser205.

The protein belongs to the HDDC2 family. As to quaternary structure, homodimer. The cofactor is Mn(2+). Co(2+) serves as cofactor. Requires Mg(2+) as cofactor.

It catalyses the reaction a 2'-deoxyribonucleoside 5'-phosphate + H2O = a 2'-deoxyribonucleoside + phosphate. Functionally, catalyzes the dephosphorylation of the nucleoside 5'-monophosphates deoxyadenosine monophosphate (dAMP), deoxycytidine monophosphate (dCMP), deoxyguanosine monophosphate (dGMP) and deoxythymidine monophosphate (dTMP). The protein is 5'-deoxynucleotidase HDDC2 (HDDC2) of Bos taurus (Bovine).